A 141-amino-acid chain; its full sequence is Large ribosomal subunit protein uL11 (141 aa).

It belongs to the universal ribosomal protein uL11 family. Part of the ribosomal stalk of the 50S ribosomal subunit. Interacts with L10 and the large rRNA to form the base of the stalk. L10 forms an elongated spine to which L12 dimers bind in a sequential fashion forming a multimeric L10(L12)X complex. Post-translationally, one or more lysine residues are methylated.

Forms part of the ribosomal stalk which helps the ribosome interact with GTP-bound translation factors. This is Large ribosomal subunit protein uL11 from Pelodictyon phaeoclathratiforme (strain DSM 5477 / BU-1).